An 84-amino-acid polypeptide reads, in one-letter code: Toxin Cll9 (84 aa).

The signal sequence occupies residues 1–19 (MNSLLMITACLILIGTVWA). The LCN-type CS-alpha/beta domain maps to 20–83 (EDGYLFDKRK…ISRTPGKTCK (64 aa)). Disulfide bonds link cysteine 31–cysteine 82, cysteine 35–cysteine 58, cysteine 44–cysteine 63, and cysteine 48–cysteine 65.

As to expression, expressed by the venom gland.

Its subcellular location is the secreted. In terms of biological role, beta toxins bind voltage-independently at site-4 of sodium channels (Nav) and shift the voltage of activation toward more negative potentials thereby affecting sodium channel activation and promoting spontaneous and repetitive firing. Has some action on peripheral ganglia, but not on other sodium channels such as those from cerebellum granular cells in culture. Induces sleep, suggesting a strong antiepileptic action. This chain is Toxin Cll9, found in Centruroides limpidus (Mexican scorpion).